Here is a 158-residue protein sequence, read N- to C-terminus: Large ribosomal subunit protein bL35m (158 aa).

This sequence belongs to the bacterial ribosomal protein bL35 family.

The protein localises to the mitochondrion. In Caenorhabditis elegans, this protein is Large ribosomal subunit protein bL35m (mrpl-35).